A 559-amino-acid chain; its full sequence is 2-isopropylmalate synthase (559 aa).

In terms of domain architecture, Pyruvate carboxyltransferase spans 30–304 (PLWAAVDLRD…DPGIDFSRMK (275 aa)). Residues Asp-39, His-243, His-245, and Asn-279 each contribute to the Mg(2+) site. Residues 436–559 (VPMGWVLRSY…ETSEQLIANS (124 aa)) form a regulatory domain region.

It belongs to the alpha-IPM synthase/homocitrate synthase family. LeuA type 2 subfamily. In terms of assembly, homodimer. Requires Mg(2+) as cofactor.

The protein localises to the cytoplasm. It catalyses the reaction 3-methyl-2-oxobutanoate + acetyl-CoA + H2O = (2S)-2-isopropylmalate + CoA + H(+). It participates in amino-acid biosynthesis; L-leucine biosynthesis; L-leucine from 3-methyl-2-oxobutanoate: step 1/4. Functionally, catalyzes the condensation of the acetyl group of acetyl-CoA with 3-methyl-2-oxobutanoate (2-ketoisovalerate) to form 3-carboxy-3-hydroxy-4-methylpentanoate (2-isopropylmalate). This chain is 2-isopropylmalate synthase, found in Alcanivorax borkumensis (strain ATCC 700651 / DSM 11573 / NCIMB 13689 / SK2).